The primary structure comprises 484 residues: PTS system MurNAc-GlcNAc-specific EIIBC component (484 aa).

Positions 5–87 (QQLAERIIAA…AELSGVKLGD (83 aa)) constitute a PTS EIIB type-1 domain. Catalysis depends on C27, which acts as the Phosphocysteine intermediate; for EIIB activity. Residues 130 to 484 (KSIANIFIPL…AMRQTDLLGD (355 aa)) enclose the PTS EIIC type-1 domain. The next 10 membrane-spanning stretches (helical) occupy residues 135–155 (IFIP…IAAV), 160–180 (MVAG…FNVI), 200–220 (FGAT…TGIA), 234–254 (LQPG…LSIV), 274–294 (IALL…AGFV), 305–325 (IISI…LPLV), 349–369 (LLPI…ALWV), 384–404 (ALPV…TLPL), 408–428 (FLTA…IGHI), and 450–470 (LGYI…TYLF).

The protein resides in the cell membrane. It catalyses the reaction N-acetyl-beta-D-muramate-(1-&gt;4)-N-acetyl-D-glucosamine(out) + N(pros)-phospho-L-histidyl-[protein] = 6-phospho-N-acetyl-beta-D-muramate-(1-&gt;4)-N-acetyl-D-glucosamine(in) + L-histidyl-[protein]. It participates in cell wall biogenesis; peptidoglycan recycling. Its function is as follows. The phosphoenolpyruvate-dependent sugar phosphotransferase system (sugar PTS), a major carbohydrate active transport system, catalyzes the phosphorylation of incoming sugar substrates concomitantly with their translocation across the cell membrane. This system is involved in the uptake and phosphorylation of MurNAc-GlcNAc, the principle peptidoglycan turnover product of S.aureus, yielding cytoplasmic MurNAc 6P-GlcNAc. This is PTS system MurNAc-GlcNAc-specific EIIBC component from Staphylococcus aureus (strain bovine RF122 / ET3-1).